Consider the following 426-residue polypeptide: Dihydroorotase (426 aa).

Zn(2+) is bound by residues His-59 and His-61. Residues His-61–Arg-63 and Asn-93 each bind substrate. Zn(2+)-binding residues include Asp-151, His-178, and His-232. Residue Asn-279 coordinates substrate. A Zn(2+)-binding site is contributed by Asp-306. The active site involves Asp-306. Residues His-310 and Phe-324 to Gly-325 each bind substrate.

Belongs to the metallo-dependent hydrolases superfamily. DHOase family. Class I DHOase subfamily. Zn(2+) serves as cofactor.

It catalyses the reaction (S)-dihydroorotate + H2O = N-carbamoyl-L-aspartate + H(+). It functions in the pathway pyrimidine metabolism; UMP biosynthesis via de novo pathway; (S)-dihydroorotate from bicarbonate: step 3/3. Its function is as follows. Catalyzes the reversible cyclization of carbamoyl aspartate to dihydroorotate. This is Dihydroorotase from Brevibacillus brevis (strain 47 / JCM 6285 / NBRC 100599).